The chain runs to 454 residues: Probable ECA polymerase (454 aa).

The next 11 helical transmembrane spans lie at L3–L23, F39–F59, F61–F81, L119–F139, G154–L174, A180–G200, G201–G221, W222–L242, L340–I360, Y377–A397, and V409–F429.

It belongs to the WzyE family. In terms of assembly, probably part of a complex composed of WzxE, WzyE and WzzE.

The protein localises to the cell inner membrane. The protein operates within bacterial outer membrane biogenesis; enterobacterial common antigen biosynthesis. In terms of biological role, probably involved in the polymerization of enterobacterial common antigen (ECA) trisaccharide repeat units. The sequence is that of Probable ECA polymerase from Yersinia pestis bv. Antiqua (strain Angola).